Here is a 448-residue protein sequence, read N- to C-terminus: Arginine synthetase ArcE (448 aa).

In terms of assembly, probably forms homotetramers and higher assemblies of tetramers. Mg(2+) serves as cofactor.

The enzyme catalyses L-arginine + ADP + phosphate + H(+) = L-citrulline + NH4(+) + ATP. Its pathway is amino-acid biosynthesis; L-proline biosynthesis. It functions in the pathway amino-acid degradation; L-arginine degradation. It participates in amino-acid biosynthesis; L-arginine biosynthesis. Functionally, arginine deiminase involved in an arginine synthetase pathway, which provides citrulline and ornithine, the precursors for proline biosynthesis. Catalyzes the conversion of L-arginine to citrulline while conserving the energy of arginine deimination to generate ATP from ADP and free phosphate. Is specific toward L-arginine and cannot use D-arginine, agmatine, guanidine, L-alanine-L-arginine dipeptide and L-arginine-L-alanine dipeptide. Can also use CDP, GDP or UDP, with lower activity (38%, 8.4% and 13.3%, respectively). The enzyme can also catalyze the reverse reaction: the ATP-dependent generation of arginine from citrulline in a single reaction by using free ammonia, without the requirement of aspartic acid. In vivo, most likely functions in the arginine catabolism to produce citrulline for proline biosynthesis while also generating ATP, but it can also contribute to arginine biosynthesis when the necessary precursors such as citrulline are abundant. This is Arginine synthetase ArcE from Thermococcus kodakarensis (strain ATCC BAA-918 / JCM 12380 / KOD1) (Pyrococcus kodakaraensis (strain KOD1)).